The primary structure comprises 413 residues: Serine hydroxymethyltransferase (413 aa).

(6S)-5,6,7,8-tetrahydrofolate-binding positions include L117 and 121-123; that span reads GHL. N6-(pyridoxal phosphate)lysine is present on K226. (6S)-5,6,7,8-tetrahydrofolate-binding positions include E239 and 349–351; that span reads SPF.

The protein belongs to the SHMT family. In terms of assembly, homodimer. Pyridoxal 5'-phosphate serves as cofactor.

It localises to the cytoplasm. It catalyses the reaction (6R)-5,10-methylene-5,6,7,8-tetrahydrofolate + glycine + H2O = (6S)-5,6,7,8-tetrahydrofolate + L-serine. It functions in the pathway one-carbon metabolism; tetrahydrofolate interconversion. The protein operates within amino-acid biosynthesis; glycine biosynthesis; glycine from L-serine: step 1/1. In terms of biological role, catalyzes the reversible interconversion of serine and glycine with tetrahydrofolate (THF) serving as the one-carbon carrier. This reaction serves as the major source of one-carbon groups required for the biosynthesis of purines, thymidylate, methionine, and other important biomolecules. Also exhibits THF-independent aldolase activity toward beta-hydroxyamino acids, producing glycine and aldehydes, via a retro-aldol mechanism. This Bacillus cereus (strain G9842) protein is Serine hydroxymethyltransferase.